The primary structure comprises 861 residues: DNA mismatch repair protein MutS (861 aa).

618-625 provides a ligand contact to ATP; that stretch reads GPNMGGKS.

This sequence belongs to the DNA mismatch repair MutS family.

This protein is involved in the repair of mismatches in DNA. It is possible that it carries out the mismatch recognition step. This protein has a weak ATPase activity. The chain is DNA mismatch repair protein MutS from Shewanella frigidimarina (strain NCIMB 400).